The primary structure comprises 220 residues: Charged multivesicular body protein 2a (220 aa).

Coiled coils occupy residues 12-53 and 198-219; these read EELL…MAKQ and EATA…NLRR. The tract at residues 196–220 is disordered; that stretch reads KGEATAALADADADLEERLNNLRRD. Positions 208–218 match the MIT-interacting motif motif; that stretch reads ADLEERLNNLR. Basic and acidic residues predominate over residues 211-220; that stretch reads EERLNNLRRD.

The protein belongs to the SNF7 family. As to quaternary structure, probable core component of the endosomal sorting required for transport complex III (ESCRT-III). ESCRT-III components are thought to multimerize to form a flat lattice on the perimeter membrane of the endosome.

The protein localises to the late endosome membrane. Its subcellular location is the cytoplasm. Functionally, probable core component of the endosomal sorting required for transport complex III (ESCRT-III) which is involved in multivesicular bodies (MVBs) formation and sorting of endosomal cargo proteins into MVBs. MVBs contain intraluminal vesicles (ILVs) that are generated by invagination and scission from the limiting membrane of the endosome and mostly are delivered to lysosomes enabling degradation of membrane proteins, such as stimulated growth factor receptors, lysosomal enzymes and lipids. This Xenopus laevis (African clawed frog) protein is Charged multivesicular body protein 2a (chmp2a).